The primary structure comprises 177 residues: Large ribosomal subunit protein uL6 (177 aa).

The protein belongs to the universal ribosomal protein uL6 family. Part of the 50S ribosomal subunit.

Functionally, this protein binds to the 23S rRNA, and is important in its secondary structure. It is located near the subunit interface in the base of the L7/L12 stalk, and near the tRNA binding site of the peptidyltransferase center. The protein is Large ribosomal subunit protein uL6 of Proteus mirabilis (strain HI4320).